The chain runs to 142 residues: Galactose-binding lectin (142 aa).

In terms of domain architecture, Galectin spans 1–141 (TYAEVESFGV…GTDIWDLLLL (141 aa)).

Homotetramer.

With respect to regulation, cytotoxic activity against L.infantum promastigotes is completely inhibited by D-galactose. Inhibition activity against biofilm formation by S.aureus and S.epidermidis is inhibited by alpha-lactose. Hemagglutination activity is inhibited by alpha-lactose (MIC=100 mM), beta-lactose (MIC=100 mM), lactulose (MIC=100 mM), bovine submaxillary mucin (BSM) (MIC=32 ug/ml), fetuin (MIC=16 ug/ml), porcine stomach mucin (PSM) type 2 (MIC=8 ug/ml) and PSM type 3 (MIC=8 ug/ml). Functionally, galactose-binding lectin. Displays antibacterial and hemagglutinin activity. Inhibits the growth of L.infantum promastigotes by damaging their membrane integrity and inducing cell apoptosis via the production of reactive oxygen species (ROS). Inhibition of L.infantum promastigotes appears to increase with time (MIC=1.2 uM/ml after 24 hours, MIC=0.9 uM/ml after 48 hours and MIC=0.6 uM/ml after 72 hours). Agglutinates Gram-negative and Gram-positive bacteria including E.coli, S.aureus and S.epidermidis, and inhibits biofilm formation by S.aureus and S.epidermidis. Displays hemagglutination activity towards all types of human erythrocytes (O, A and B) and rabbit erythrocytes. The chain is Galactose-binding lectin from Chondrilla caribensis (Chicken liver sponge).